The following is a 219-amino-acid chain: Poxin (219 aa).

Histidine 17 acts as the Proton donor in catalysis. The active-site Shared with catalytic histidine of dimeric partner is tyrosine 138. Lysine 142 serves as the catalytic Proton acceptor; shared with catalytic histidine of dimeric partner.

Belongs to the poxin family. In terms of assembly, homodimer.

The enzyme catalyses 2',3'-cGAMP + H2O = Gp(2'-5')Ap(3') + H(+). Functionally, nuclease that is responsible for viral evasion of host cGAS-STING innate immunity. Cleaves 2',3'-cGAMP which is produced by host cGAS following recognition of cytosolic DNA and blocks the subsequent 2',3'-cGAMP-mediated activation of TMEM173/STING, which normally spreads to adjacent cells and activates the interferon and NF-kappa-B immune responses. The polypeptide is Poxin (OPG188) (Bos taurus (Bovine)).